Consider the following 315-residue polypeptide: Malate dehydrogenase (315 aa).

Residues 7–12 (GAGNIG) and D32 contribute to the NAD(+) site. R81 and R87 together coordinate substrate. Residues N94 and 117–119 (VTN) contribute to the NAD(+) site. 2 residues coordinate substrate: N119 and R150. H174 functions as the Proton acceptor in the catalytic mechanism.

Belongs to the LDH/MDH superfamily. MDH type 3 family.

The enzyme catalyses (S)-malate + NAD(+) = oxaloacetate + NADH + H(+). Catalyzes the reversible oxidation of malate to oxaloacetate. The sequence is that of Malate dehydrogenase from Neorickettsia sennetsu (strain ATCC VR-367 / Miyayama) (Ehrlichia sennetsu).